Reading from the N-terminus, the 459-residue chain is Biphenyl dioxygenase subunit alpha (459 aa).

One can recognise a Rieske domain in the interval 58-156 (WLLLGHESHV…KEGDCGFDKA (99 aa)). 4 residues coordinate [2Fe-2S] cluster: C100, H102, C120, and H123. Positions 233 and 239 each coordinate Fe cation.

The protein belongs to the bacterial ring-hydroxylating dioxygenase alpha subunit family. Heterohexamer consisting of three BphA subunits and three BphE subunits. A ferredoxin (BphF) and a ferredoxin reductase (BphG) must be present to obtain activity. It depends on [2Fe-2S] cluster as a cofactor. Fe cation serves as cofactor.

It carries out the reaction biphenyl + NADH + O2 + H(+) = (2R,3S)-3-phenylcyclohexa-3,5-diene-1,2-diol + NAD(+). It functions in the pathway xenobiotic degradation; biphenyl degradation; 2-hydroxy-2,4-pentadienoate and benzoate from biphenyl: step 1/4. The sequence is that of Biphenyl dioxygenase subunit alpha (bphA) from Paraburkholderia xenovorans (strain LB400).